A 382-amino-acid polypeptide reads, in one-letter code: MAPTQSKVKIHNLAEAHEKVLRAFPIEVEQNSEGNKLLVKQIRIRTLGHADHSNDSICFLNTYGFIKEAVSQTEFMRAGQRPESKNTLTACMLPFGPGPNIGSPQKMLEYAEDIKIHVRKTAGCKEQIVFSLDRTPQVFRGFQFPRDRYVCVPSDKYIKSPGKLVAGPNYCYTITFLSLTFCPSSQKFKVPRPILNFRSTRMRGIHLEIIMKITCSENSPIRKTLITDDPENGPKASVWIHLCNLYKGRNPIKVYDEAYFAEKCKQMLLSVGISDLWGPTIAVHANGKIPKSASLYFNSRGWALHPIADASPTMAKQLWSIGCEIIEVNAILQGSDYSALVDHPDVIYRKIRIDPAKKQYAHSKWNPFKKAISMPDLTGISI.

It belongs to the morbillivirus/respirovirus/rubulavirus M protein family.

Its subcellular location is the virion. Functionally, the M protein has a crucial role in virus assembly and interacts with the RNP complex as well as with the viral membrane. The chain is Matrix protein (M) from Human parainfluenza 4b virus (strain 68-333) (HPIV-4b).